The chain runs to 314 residues: 2-oxo-3-(phosphooxy)propyl 3-oxoalkanoate synthase (314 aa).

The protein belongs to the AfsA family.

It carries out the reaction a medium-chain 3-oxoacyl-[ACP] + dihydroxyacetone phosphate = a (4-alkanoyl-5-oxo-2,5-dihydrofuran-3-yl)methyl phosphate + holo-[ACP] + H2O. Involved of the biosynthesis of S.coelicolor butanolide 1 (SCB1), a gamma-butyrolactone that triggers antibiotic production. The chain is 2-oxo-3-(phosphooxy)propyl 3-oxoalkanoate synthase from Streptomyces coelicolor (strain ATCC BAA-471 / A3(2) / M145).